Here is a 348-residue protein sequence, read N- to C-terminus: tRNA (cytosine(34)-C(5))-methyltransferase, mitochondrial (348 aa).

S-adenosyl-L-methionine is bound by residues 139–145 (CAAPGGK), E162, D193, and D211. The active-site Nucleophile is C265.

It belongs to the class I-like SAM-binding methyltransferase superfamily. RsmB/NOP family.

It is found in the mitochondrion matrix. It carries out the reaction cytidine(34) in mitochondrial tRNA + S-adenosyl-L-methionine = 5-methylcytidine(34) in mitochondrial tRNA + S-adenosyl-L-homocysteine + H(+). Functionally, mitochondrial tRNA methyltransferase that mediates methylation of cytosine to 5-methylcytosine (m5C) at position 34 of mt-tRNA(Met). mt-tRNA(Met) methylation at cytosine(34) takes place at the wobble position of the anticodon and initiates the formation of 5-formylcytosine (f(5)c) at this position. mt-tRNA(Met) containing the f(5)c modification at the wobble position enables recognition of the AUA codon in addition to the AUG codon, expanding codon recognition in mitochondrial translation. In Mus musculus (Mouse), this protein is tRNA (cytosine(34)-C(5))-methyltransferase, mitochondrial.